The following is a 349-amino-acid chain: Protein disulfide isomerase Creld2 (349 aa).

The signal sequence occupies residues 1 to 22; the sequence is MHLLLAAGFGLLLLLLPPPAAS. The CXXC motif lies at 28-31; it reads CQRC. Intrachain disulfides connect Cys-28/Cys-31, Cys-137/Cys-151, Cys-145/Cys-163, and Cys-165/Cys-174. The region spanning 133 to 175 is the EGF-like 1 domain; that stretch reads DCKECQGGSERPCSGNGYCSGDGSRQGDGSCQCHAGYKGPLCI. Residue Asn-187 is glycosylated (N-linked (GlcNAc...) asparagine). An FU 1 repeat occupies 190–237; that stretch reads HSICLACDESCKTCSGPSNKDCVQCEVGWARVEDACVDVDECAAETPP. Residue Asn-248 is glycosylated (N-linked (GlcNAc...) asparagine). Residues 250-297 form an FU 2 repeat; it reads SYICEECDSTCVGCTGKGPANCKECIAGYTKQSGQCADIDECSLEEKA. Positions 260–263 match the CXXC motif; sequence CVGC. Disulfide bonds link Cys-260–Cys-263, Cys-291–Cys-305, Cys-298–Cys-314, and Cys-316–Cys-327. In terms of domain architecture, EGF-like 2; calcium-binding spans 287–328; it reads DIDECSLEEKACKRRNENCYNVPGSFVCVCPDGFEETEDACV.

It belongs to the CRELD family. In terms of assembly, interacts with Chrna4. Component of a complex containing at least Creld2, Manf, Matn3 and Pdia4. Broadly expressed in brain (at protein level).

It localises to the endoplasmic reticulum. It catalyses the reaction Catalyzes the rearrangement of -S-S- bonds in proteins.. In terms of biological role, protein disulfide isomerase. Might play a role in the unfolded protein response. May regulate transport of alpha4-beta2 neuronal acetylcholine receptor. The sequence is that of Protein disulfide isomerase Creld2 (Creld2) from Rattus norvegicus (Rat).